A 141-amino-acid polypeptide reads, in one-letter code: Hemoglobin subunit alpha (141 aa).

A Globin domain is found at 1–141; that stretch reads VLSPADKTNV…VSTVLTSKYR (141 aa). Ser3 carries the phosphoserine modification. Lys7 carries the N6-succinyllysine modification. Thr8 is subject to Phosphothreonine. N6-succinyllysine is present on Lys11. An N6-acetyllysine; alternate modification is found at Lys16. Lys16 bears the N6-succinyllysine; alternate mark. Phosphotyrosine is present on Tyr24. Ser35 carries the post-translational modification Phosphoserine. An N6-succinyllysine modification is found at Lys40. His58 serves as a coordination point for O2. Position 87 (His87) interacts with heme b. A Phosphoserine modification is found at Ser102. Phosphothreonine is present on Thr108. 2 positions are modified to phosphoserine: Ser124 and Ser131. Residues Thr134 and Thr137 each carry the phosphothreonine modification. Ser138 carries the post-translational modification Phosphoserine.

Belongs to the globin family. As to quaternary structure, heterotetramer of two alpha chains and two beta chains. As to expression, red blood cells.

Involved in oxygen transport from the lung to the various peripheral tissues. Its function is as follows. Hemopressin acts as an antagonist peptide of the cannabinoid receptor CNR1. Hemopressin-binding efficiently blocks cannabinoid receptor CNR1 and subsequent signaling. The sequence is that of Hemoglobin subunit alpha (HBA) from Cynopterus sphinx (Indian short-nosed fruit bat).